A 324-amino-acid polypeptide reads, in one-letter code: 2-dehydro-3-deoxygluconokinase (324 aa).

Substrate contacts are provided by residues 35–39, 106–108, and R170; these read GAESN and YYR. ATP contacts are provided by residues 168–170, 228–233, and 258–261; these read NVR, KLGKEG, and GAGD. 2 residues coordinate substrate: D261 and D297. The Proton acceptor role is filled by D261.

It belongs to the carbohydrate kinase PfkB family.

The catalysed reaction is 2-dehydro-3-deoxy-D-gluconate + ATP = 2-dehydro-3-deoxy-6-phospho-D-gluconate + ADP + H(+). The protein operates within carbohydrate acid metabolism; 2-dehydro-3-deoxy-D-gluconate degradation; D-glyceraldehyde 3-phosphate and pyruvate from 2-dehydro-3-deoxy-D-gluconate: step 1/2. Functionally, catalyzes the phosphorylation of 2-keto-3-deoxygluconate (KDG) to produce 2-keto-3-deoxy-6-phosphogluconate (KDPG). In Bacillus subtilis (strain 168), this protein is 2-dehydro-3-deoxygluconokinase (kdgK).